Here is a 600-residue protein sequence, read N- to C-terminus: Aspartate--tRNA(Asp/Asn) ligase (600 aa).

Residue E174 participates in L-aspartate binding. The tract at residues 198–201 is aspartate; the sequence is QLFK. R220 lines the L-aspartate pocket. ATP is bound by residues 220-222 and Q229; that span reads RDE. H457 serves as a coordination point for L-aspartate. Position 491 (E491) interacts with ATP. R498 is a binding site for L-aspartate. 543–546 provides a ligand contact to ATP; the sequence is GLDR.

It belongs to the class-II aminoacyl-tRNA synthetase family. Type 1 subfamily. In terms of assembly, homodimer.

The protein localises to the cytoplasm. It catalyses the reaction tRNA(Asx) + L-aspartate + ATP = L-aspartyl-tRNA(Asx) + AMP + diphosphate. Aspartyl-tRNA synthetase with relaxed tRNA specificity since it is able to aspartylate not only its cognate tRNA(Asp) but also tRNA(Asn). Reaction proceeds in two steps: L-aspartate is first activated by ATP to form Asp-AMP and then transferred to the acceptor end of tRNA(Asp/Asn). This Burkholderia pseudomallei (strain 668) protein is Aspartate--tRNA(Asp/Asn) ligase.